We begin with the raw amino-acid sequence, 218 residues long: Small ribosomal subunit protein uS3c (218 aa).

The KH type-2 domain maps to 47-118; the sequence is VQKEMRISSG…RLNVVITRVA (72 aa).

This sequence belongs to the universal ribosomal protein uS3 family. As to quaternary structure, part of the 30S ribosomal subunit.

The protein localises to the plastid. It localises to the chloroplast. In Ceratophyllum demersum (Rigid hornwort), this protein is Small ribosomal subunit protein uS3c (rps3).